The primary structure comprises 452 residues: Keratin, type I cytoskeletal 42 (452 aa).

The segment at 4–93 (TTSVRQFSTS…GVSDALLGGS (90 aa)) is head. Positions 94 to 129 (EKETMQNLNDRLATYLDRVRALEEANADLEVKIREW) are coil 1A. An IF rod domain is found at 94 to 405 (EKETMQNLND…RLLEGEDAHL (312 aa)). The linker 1 stretch occupies residues 130–147 (YKKQGPGPARDYSPYFKT). The segment at 148–239 (IEDLRNKILA…KNHEEEMNAL (92 aa)) is coil 1B. The linker 12 stretch occupies residues 240–262 (RGQVGGDVNVEMDAAPGVDLSRI). Residues 263–401 (LNEMRDQYEK…ATYRRLLEGE (139 aa)) form a coil 2 region. The tract at residues 402–452 (DAHLATQYSSSLASQPSREGMVTSRQVRTIVEEVQDGKVVSSREQVHRSTH) is tail.

It belongs to the intermediate filament family. Heterodimer of a type I and a type II keratin. Colocalizes with KRT8/KRT18 filament network. As to expression, expressed in nail matrix and nail bed epithelium (at protein level). Also expressed in tongue and digits with weak expression in vibrissae and in both filiform and fungiform papillae of oral mucosa.

It localises to the cytoplasm. The protein is Keratin, type I cytoskeletal 42 of Mus musculus (Mouse).